The sequence spans 170 residues: Translocon-associated protein subunit gamma (170 aa).

Residues 1-24 (MAEVDEFSAFRHENDVSIEQRIVY) lie on the Lumenal side of the membrane. Residues 25–45 (FINSLIVALVPVYLYHAIFFM) form a helical membrane-spanning segment. Over 46-51 (SIDDHM) the chain is Cytoplasmic. The helical transmembrane segment at 52–72 (IIYGSVTLFAAIVLTFAYNNI) threads the bilayer. The Lumenal portion of the chain corresponds to 73–121 (YRMKRLKLSASREHISIASKNKVGDKKKFAAAQKEVQALVTSHEAIAAS). A helical membrane pass occupies residues 122 to 141 (IMYNNAVFLICVSIFSFIIF). At 142 to 145 (KNVP) the chain is on the cytoplasmic side. The helical transmembrane segment at 146-168 (LVYNYIISISLGAGLTSFLSTSS) threads the bilayer.

This sequence belongs to the TRAP-gamma family. In terms of assembly, heterotrimer of TRAP-alpha, TRAP-beta and TRAP-gamma.

The protein localises to the endoplasmic reticulum membrane. Functionally, TRAP proteins are part of a complex whose function is to bind calcium to the ER membrane and thereby regulate the retention of ER resident proteins. The protein is Translocon-associated protein subunit gamma (ssr3) of Dictyostelium discoideum (Social amoeba).